Here is a 307-residue protein sequence, read N- to C-terminus: MmsAB operon regulatory protein (307 aa).

The 99-residue stretch at 201–299 (DGLHAYMREH…GLSPSAYRQR (99 aa)) folds into the HTH araC/xylS-type domain. 2 consecutive DNA-binding regions (H-T-H motif) follow at residues 218 to 239 (ERLA…KAIT) and 266 to 289 (VARV…SKVM).

Its function is as follows. Regulatory protein for the mmsAB operon. Activates the transcription of the mmsAB genes. The polypeptide is MmsAB operon regulatory protein (Pseudomonas aeruginosa (strain ATCC 15692 / DSM 22644 / CIP 104116 / JCM 14847 / LMG 12228 / 1C / PRS 101 / PAO1)).